The sequence spans 393 residues: Pre-mRNA-splicing regulator WTAP (393 aa).

Residues 242-393 (QIQISGNRTP…SSVNVQGSVL (152 aa)) form a disordered region. Over residues 254–267 (EPKDEGETSGKDCG) the composition is skewed to basic and acidic residues. Polar residues-rich tracts occupy residues 272–286 (GPSN…THSS) and 321–353 (DGSS…SNDT). Positions 354–365 (DSNHDSQEEKPV) are enriched in basic and acidic residues. The segment covering 369 to 393 (GNRTVSSRHLQNGLDSSVNVQGSVL) has biased composition (polar residues).

This sequence belongs to the fl(2)d family. Component of the WMM complex, a N6-methyltransferase complex composed of a catalytic subcomplex, named MAC, and of an associated subcomplex, named MACOM. Component of the MACOM subcomplex.

The protein localises to the nucleus speckle. It is found in the nucleus. The protein resides in the nucleoplasm. Its function is as follows. Associated component of the WMM complex, a complex that mediates N6-methyladenosine (m6A) methylation of RNAs, a modification that plays a role in the efficiency of mRNA splicing and RNA processing. The polypeptide is Pre-mRNA-splicing regulator WTAP (Xenopus laevis (African clawed frog)).